A 138-amino-acid polypeptide reads, in one-letter code: Basic phospholipase A2 homolog G6K49 (138 aa).

The signal sequence occupies residues 1 to 16 (MRTLWIMAVLLLGVEG). 7 disulfide bridges follow: C42/C132, C44/C60, C59/C112, C65/C138, C66/C105, C73/C98, and C91/C103. The interval 122–133 (KKHRVTVKFLCK) is important for membrane-damaging activities in eukaryotes and bacteria; heparin-binding.

The protein belongs to the phospholipase A2 family. Group II subfamily. K49 sub-subfamily. As to quaternary structure, homodimer; non-covalently linked. Expressed by the venom gland.

It is found in the secreted. Snake venom phospholipase A2 (PLA2) that lacks enzymatic activity. Displays myotoxic activities. A model of myotoxic mechanism has been proposed: an apo Lys49-PLA2 is activated by the entrance of a hydrophobic molecule (e.g. fatty acid) at the hydrophobic channel of the protein leading to a reorientation of a monomer. This reorientation causes a transition between 'inactive' to 'active' states, causing alignment of C-terminal and membrane-docking sites (MDoS) side-by-side and putting the membrane-disruption sites (MDiS) in the same plane, exposed to solvent and in a symmetric position for both monomers. The MDoS region stabilizes the toxin on membrane by the interaction of charged residues with phospholipid head groups. Subsequently, the MDiS region destabilizes the membrane with penetration of hydrophobic residues. This insertion causes a disorganization of the membrane, allowing an uncontrolled influx of ions (i.e. calcium and sodium), and eventually triggering irreversible intracellular alterations and cell death. This chain is Basic phospholipase A2 homolog G6K49, found in Calloselasma rhodostoma (Malayan pit viper).